The sequence spans 178 residues: Gamma-crystallin S (178 aa).

Position 2 is an N-acetylserine (S2). Positions 2-5 are N-terminal arm; that stretch reads SKTG. 2 Beta/gamma crystallin 'Greek key' domains span residues 6–44 and 45–87; these read GKISFYEDRNFQGRRYDCDCDCADFRSYLSRCNSIRVEG and GTWA…RAVH. The interval 88-93 is connecting peptide; the sequence is LSSGGQ. 2 Beta/gamma crystallin 'Greek key' domains span residues 94–134 and 135–177; these read AKIQ…KVVE and GTWI…RRIV.

The protein belongs to the beta/gamma-crystallin family. In terms of assembly, monomer.

Crystallins are the dominant structural components of the vertebrate eye lens. The sequence is that of Gamma-crystallin S (Crygs) from Mus musculus (Mouse).